Consider the following 405-residue polypeptide: Deoxyguanosinetriphosphate triphosphohydrolase-like protein (405 aa).

Residues R75–N219 form the HD domain.

It belongs to the dGTPase family. Type 2 subfamily.

In Rhizobium etli (strain ATCC 51251 / DSM 11541 / JCM 21823 / NBRC 15573 / CFN 42), this protein is Deoxyguanosinetriphosphate triphosphohydrolase-like protein.